A 316-amino-acid chain; its full sequence is Adenine deaminase (316 aa).

3 residues coordinate Zn(2+): histidine 14, histidine 16, and histidine 194. Catalysis depends on glutamate 197, which acts as the Proton donor. Aspartate 275 lines the Zn(2+) pocket. Aspartate 276 provides a ligand contact to substrate.

Belongs to the metallo-dependent hydrolases superfamily. Adenosine and AMP deaminases family. Adenine deaminase type 2 subfamily. It depends on Zn(2+) as a cofactor.

The catalysed reaction is adenine + H2O + H(+) = hypoxanthine + NH4(+). Catalyzes the hydrolytic deamination of adenine to hypoxanthine. Plays an important role in the purine salvage pathway and in nitrogen catabolism. This Stutzerimonas stutzeri (strain A1501) (Pseudomonas stutzeri) protein is Adenine deaminase.